Consider the following 504-residue polypeptide: Maturase K (504 aa).

This sequence belongs to the intron maturase 2 family. MatK subfamily.

Its subcellular location is the plastid. It localises to the chloroplast. In terms of biological role, usually encoded in the trnK tRNA gene intron. Probably assists in splicing its own and other chloroplast group II introns. This is Maturase K from Cardamine amara (Large bitter-cress).